A 136-amino-acid chain; its full sequence is Large ribosomal subunit protein bL19 (136 aa).

Belongs to the bacterial ribosomal protein bL19 family.

This protein is located at the 30S-50S ribosomal subunit interface and may play a role in the structure and function of the aminoacyl-tRNA binding site. The protein is Large ribosomal subunit protein bL19 of Xylella fastidiosa (strain M23).